Consider the following 211-residue polypeptide: MASGQGPGPPRQECGEPALPSASEEQVAQDTEEVFRSYVFYRHQQEQEAEGVAAPADPEMVTLPLQPSSTMGQVGRQLAIIGDDINRRYDSEFQTMLQHLQPTAENAYEYFTKIATSLFESGINWGRVVALLGFGYRLALHVYQHGLTGFLGQVTRFVVDFMLHHCIARWIAQRGGWVAALNLGNGPILNVLVVLGVVLLGQFVVRRFFKS.

The interval 1–28 (MASGQGPGPPRQECGEPALPSASEEQVA) is disordered. A2 carries the N-acetylalanine modification. Residues 74 to 88 (VGRQLAIIGDDINRR) carry the BH3 motif. The short motif at 117-136 (SLFESGINWGRVVALLGFGY) is the BH1 element. 2 residues coordinate Zn(2+): D160 and H164. Positions 169 to 184 (RWIAQRGGWVAALNLG) match the BH2 motif. The chain crosses the membrane as a helical span at residues 188-205 (ILNVLVVLGVVLLGQFVV).

It belongs to the Bcl-2 family. As to quaternary structure, homodimer. Formation of the homodimer is zinc-dependent. Forms heterodimers with BCL2 and BCL2L1 isoform Bcl-X(L). Forms heterooligomers with BAX. Interacts with BCL2A1. Interacts with RTL10/BOP. Interacts with VDAC1. Interacts with GIMAP3/IAN4 and GIMAP5/IAN5. In terms of assembly, (Microbial infection) Interacts with vaccinia virus protein F1. (Microbial infection) Interacts with myxoma virus protein M11L. As to quaternary structure, (Microbial infection) Interacts with Epstein-Barr virus protein BALF1. In terms of assembly, (Microbial infection) Interacts with adenovirus protein E1B 19K. As to expression, expressed in a wide variety of tissues, with highest levels in the heart and skeletal muscle.

The protein resides in the mitochondrion outer membrane. Functionally, plays a role in the mitochondrial apoptotic process. Upon arrival of cell death signals, promotes mitochondrial outer membrane (MOM) permeabilization by oligomerizing to form pores within the MOM. This releases apoptogenic factors into the cytosol, including cytochrome c, promoting the activation of caspase 9 which in turn processes and activates the effector caspases. This chain is Bcl-2 homologous antagonist/killer (BAK1), found in Homo sapiens (Human).